A 603-amino-acid chain; its full sequence is Keratin, type II cuticular Hb4 (603 aa).

The tract at residues 1-173 (MSCRSYRVSS…PNAQRVKRDE (173 aa)) is head. In terms of domain architecture, IF rod spans 173-484 (EKEQIKTLNN…RLLEGEEIRI (312 aa)). Positions 174–208 (KEQIKTLNNKFASFIDKVRFLEQQNKLLETKWSFL) are coil 1A. Residues 209–218 (QEQKCARSNL) form a linker 1 region. The tract at residues 219-319 (EPLFDNYITN…YHEEIEMLQS (101 aa)) is coil 1B. The tract at residues 320-336 (HISETSVIVKMDNSRDL) is linker 12. A coil 2 region spans residues 337–480 (NLDGIIAEVK…VTYRRLLEGE (144 aa)). The interval 481–603 (EIRICEGVGP…STTTSRRTRY (123 aa)) is tail. The tract at residues 579–603 (CSGGRGNRSSSVRFSSTTTSRRTRY) is disordered.

This sequence belongs to the intermediate filament family. In terms of assembly, heterotetramer of two type I and two type II keratins. As to expression, in skin, only expressed in the suprabasal cells of tail scale epidermis. Suprabasally expressed in stratified squamous epithelia and also in the posterior unit of the complex filiform papillae of tongue. Expressed in rare anatomical sites in which an orthokeratinized stratum corneum would be too soft and a hard keratinized structure would be too rigid to meet the functional requirement of the respective epithelia.

This Mus musculus (Mouse) protein is Keratin, type II cuticular Hb4 (Krt84).